A 127-amino-acid chain; its full sequence is DNA-directed RNA polymerase subunit omega (127 aa).

The protein belongs to the RNA polymerase subunit omega family. In terms of assembly, the RNAP catalytic core consists of 2 alpha, 1 beta, 1 beta' and 1 omega subunit. When a sigma factor is associated with the core the holoenzyme is formed, which can initiate transcription.

It catalyses the reaction RNA(n) + a ribonucleoside 5'-triphosphate = RNA(n+1) + diphosphate. In terms of biological role, promotes RNA polymerase assembly. Latches the N- and C-terminal regions of the beta' subunit thereby facilitating its interaction with the beta and alpha subunits. In Rickettsia peacockii (strain Rustic), this protein is DNA-directed RNA polymerase subunit omega.